We begin with the raw amino-acid sequence, 146 residues long: Small ribosomal subunit protein uS9 (146 aa).

It belongs to the universal ribosomal protein uS9 family. Component of the small ribosomal subunit.

The protein resides in the cytoplasm. Component of the small ribosomal subunit. The ribosome is a large ribonucleoprotein complex responsible for the synthesis of proteins in the cell. This is Small ribosomal subunit protein uS9 (rps16) from Ictalurus punctatus (Channel catfish).